The sequence spans 163 residues: MPIVLLGFMGVGKTTTAHLLNLPVYDMDHIIEERIGMPIADYFSLEGEASFRQLETEVLKGLLDLPSNCIVSTGGGVIKSEVNRELLLANREDNVLLTASFEVSYQRIRKDRQSQRPLFLQCSKEEFEALYRERMALYQGLADTVIDTDKLIPEQVARKILCK.

ATP is bound at residue 10–15 (GVGKTT). Residue T14 coordinates Mg(2+). Substrate is bound by residues D28, R52, and G75. Residue R116 participates in ATP binding. R134 contributes to the substrate binding site.

It belongs to the shikimate kinase family. As to quaternary structure, monomer. Mg(2+) is required as a cofactor.

Its subcellular location is the cytoplasm. The catalysed reaction is shikimate + ATP = 3-phosphoshikimate + ADP + H(+). It participates in metabolic intermediate biosynthesis; chorismate biosynthesis; chorismate from D-erythrose 4-phosphate and phosphoenolpyruvate: step 5/7. In terms of biological role, catalyzes the specific phosphorylation of the 3-hydroxyl group of shikimic acid using ATP as a cosubstrate. The protein is Shikimate kinase of Streptococcus suis (strain 98HAH33).